The following is a 210-amino-acid chain: Probable nicotinate-nucleotide adenylyltransferase (210 aa).

Belongs to the NadD family.

It catalyses the reaction nicotinate beta-D-ribonucleotide + ATP + H(+) = deamido-NAD(+) + diphosphate. It participates in cofactor biosynthesis; NAD(+) biosynthesis; deamido-NAD(+) from nicotinate D-ribonucleotide: step 1/1. Functionally, catalyzes the reversible adenylation of nicotinate mononucleotide (NaMN) to nicotinic acid adenine dinucleotide (NaAD). This is Probable nicotinate-nucleotide adenylyltransferase from Streptococcus pyogenes serotype M6 (strain ATCC BAA-946 / MGAS10394).